The following is a 333-amino-acid chain: MSDGSRTALSKSTFHFAAGLGSGVLSAVLLQPIDLLKTRVQQSGAHSLSAAIADIRAAPRLLPALWRGAVPSALRTGFGSAIYFTSLNAIRQSAARISPLPSSSSSTTTSSSTTTSSSSSSLPKLSNTSNLLAGAAARSLAGLILMPLTVLKVRYESTLYNYTSLASAARDIAAHEGARGFFAGYGATAVRDAPYAGLYVLFYEQGKKRLSQLFPTTTTTTTTNSTQNGPMGLQHAASINFASGVLAGVICSVVSNPFDAVKTRIQLQPGRYRNMVSGARRMVGEEGVRALWDGLALRMSRKAVSSALAWTVYEELIRRAEAGWRAGAARERL.

Solcar repeat units lie at residues 10 to 93, 125 to 209, and 235 to 319; these read SKST…IRQS, LSNT…GKKR, and HAAS…LIRR. The next 2 membrane-spanning stretches (helical) occupy residues 16–41 and 68–94; these read FAAGLGSGVLSAVLLQPIDLLKTRVQ and GAVPSALRTGFGSAIYFTSLNAIRQSA. Residues 98–126 form a disordered region; it reads SPLPSSSSSTTTSSSTTTSSSSSSLPKLS. A run of 4 helical transmembrane segments spans residues 131 to 156, 184 to 207, 239 to 265, and 294 to 312; these read LLAGAAARSLAGLILMPLTVLKVRYE, GYGATAVRDAPYAGLYVLFYEQGK, INFASGVLAGVICSVVSNPFDAVKTRI, and GLALRMSRKAVSSALAWTV.

This sequence belongs to the mitochondrial carrier (TC 2.A.29) family. SLC25A38 subfamily.

Its subcellular location is the mitochondrion inner membrane. It carries out the reaction glycine(in) = glycine(out). In terms of biological role, mitochondrial glycine transporter that imports glycine into the mitochondrial matrix. Plays an important role in providing glycine for the first enzymatic step in heme biosynthesis, the condensation of glycine with succinyl-CoA to produce 5-aminolevulinate (ALA) in the mitochondrial matrix. The protein is Mitochondrial glycine transporter of Chaetomium globosum (strain ATCC 6205 / CBS 148.51 / DSM 1962 / NBRC 6347 / NRRL 1970) (Soil fungus).